Here is a 516-residue protein sequence, read N- to C-terminus: Probable inactive beta-glucosidase 14 (516 aa).

The first 23 residues, Met-1–Ala-23, serve as a signal peptide directing secretion. Residues Gln-43, His-145, and Asn-190 to Gln-191 each bind a beta-D-glucoside. A glycan (N-linked (GlcNAc...) asparagine) is linked at Asn-193. Cys-210 and Cys-217 are disulfide-bonded. 2 N-linked (GlcNAc...) asparagine glycosylation sites follow: Asn-221 and Asn-270. Residue Tyr-334 coordinates a beta-D-glucoside. Residues Cys-342 and Cys-347 are joined by a disulfide bond. Glu-405 provides a ligand contact to a beta-D-glucoside. Residue Glu-405 is the Nucleophile of the active site. Asn-415 and Asn-423 each carry an N-linked (GlcNAc...) asparagine glycan. Residues Trp-454, Glu-461–Trp-462, and Phe-470 contribute to the a beta-D-glucoside site.

Belongs to the glycosyl hydrolase 1 family. As to expression, expressed in flowers and endosperm.

The protein is Probable inactive beta-glucosidase 14 of Oryza sativa subsp. japonica (Rice).